A 502-amino-acid polypeptide reads, in one-letter code: ATP synthase subunit alpha (502 aa).

Gly-169–Thr-176 is a binding site for ATP.

The protein belongs to the ATPase alpha/beta chains family. In terms of assembly, F-type ATPases have 2 components, CF(1) - the catalytic core - and CF(0) - the membrane proton channel. CF(1) has five subunits: alpha(3), beta(3), gamma(1), delta(1), epsilon(1). CF(0) has three main subunits: a(1), b(2) and c(9-12). The alpha and beta chains form an alternating ring which encloses part of the gamma chain. CF(1) is attached to CF(0) by a central stalk formed by the gamma and epsilon chains, while a peripheral stalk is formed by the delta and b chains.

The protein localises to the cell membrane. The enzyme catalyses ATP + H2O + 4 H(+)(in) = ADP + phosphate + 5 H(+)(out). Produces ATP from ADP in the presence of a proton gradient across the membrane. The alpha chain is a regulatory subunit. The protein is ATP synthase subunit alpha of Exiguobacterium sp. (strain ATCC BAA-1283 / AT1b).